We begin with the raw amino-acid sequence, 280 residues long: Biotin carboxyl carrier protein of acetyl-CoA carboxylase 1, chloroplastic (280 aa).

Residues 1 to 82 constitute a chloroplast transit peptide; that stretch reads MASSSFSVTS…SNAAKVDGPS (82 aa). The span at 52-75 shows a compositional bias: polar residues; that stretch reads PSRSSYPVVKAQSNKVSTGASSNA. Disordered regions lie at residues 52–106 and 164–215; these read PSRS…ATEE and QPSY…GTFY. Over residues 177–188 the composition is skewed to low complexity; sequence PAAAAPAPSTPA. Residues 189–198 show a composition bias toward pro residues; it reads SLPPPSPPTP. In terms of domain architecture, Biotinyl-binding spans 203 to 279; sequence LPTVKSPMAG…SLDTPLFVVQ (77 aa). Lysine 245 bears the N6-biotinyllysine mark.

As to quaternary structure, acetyl-CoA carboxylase is a heterohexamer composed of biotin carboxyl carrier protein, biotin carboxylase and 2 subunits each of ACCase subunit alpha and ACCase plastid-coded subunit beta (accD). In terms of tissue distribution, present in developing tissues from roots, leaves, flowers, siliques and seeds (at protein level).

It localises to the plastid. Its subcellular location is the chloroplast. Its pathway is lipid metabolism; fatty acid biosynthesis. This protein is a component of the acetyl coenzyme A carboxylase complex; first, biotin carboxylase catalyzes the carboxylation of the carrier protein and then the transcarboxylase transfers the carboxyl group to form malonyl-CoA. The chain is Biotin carboxyl carrier protein of acetyl-CoA carboxylase 1, chloroplastic (BCCP1) from Arabidopsis thaliana (Mouse-ear cress).